The primary structure comprises 194 residues: FMN-dependent NADH:quinone oxidoreductase (194 aa).

Residues S10, 16–18 (SQS), 91–94 (MYNF), and 135–138 (TRGG) each bind FMN.

Belongs to the azoreductase type 1 family. Homodimer. FMN serves as cofactor.

The catalysed reaction is 2 a quinone + NADH + H(+) = 2 a 1,4-benzosemiquinone + NAD(+). The enzyme catalyses N,N-dimethyl-1,4-phenylenediamine + anthranilate + 2 NAD(+) = 2-(4-dimethylaminophenyl)diazenylbenzoate + 2 NADH + 2 H(+). Quinone reductase that provides resistance to thiol-specific stress caused by electrophilic quinones. Functionally, also exhibits azoreductase activity. Catalyzes the reductive cleavage of the azo bond in aromatic azo compounds to the corresponding amines. In Vibrio parahaemolyticus serotype O3:K6 (strain RIMD 2210633), this protein is FMN-dependent NADH:quinone oxidoreductase.